Reading from the N-terminus, the 1351-residue chain is Tripartite motif-containing protein 66 (1351 aa).

The segment at 105 to 150 adopts a B box-type 1; atypical zinc-finger fold; it reads MARNCSECKEKRAAHILCTYCNRWLCSSCTEEHRHSPVPGGPFFPR. Cys109, Cys112, Cys133, His139, Cys169, His172, Cys192, and His197 together coordinate Zn(2+). Residues 164-205 form a B box-type 2 zinc finger; that stretch reads DFTLYCPLHTQEVLKLFCETCDMLTCHSCLVVEHKEHRCRHV. A coiled-coil region spans residues 234–304; that stretch reads AKQIEDRIFE…IMVLNRQFEH (71 aa). 3 disordered regions span residues 542 to 608, 663 to 730, and 857 to 895; these read FGHH…CSQN, APVQ…VRKH, and CPLQSIPPVSDMQPETGSSSSSGRTSGSLCPRDGADPSL. Over residues 560-588 the composition is skewed to pro residues; that stretch reads QLPPPPPPLPHPPPPLPPPPQQPHPPLPP. Over residues 664–676 the composition is skewed to polar residues; that stretch reads PVQSQSQEETLQA. Residues 872–884 show a composition bias toward low complexity; the sequence is TGSSSSSGRTSGS. Positions 995-999 match the PxVxL motif motif; the sequence is PYVRL. A disordered region spans residues 1067 to 1098; that stretch reads TSLAGQRPPEVEGTSPEEHRLIPRTPGAKKGP. Residues 1105–1152 form a PHD-type zinc finger; the sequence is EDFCAVCLNGGELLCCDRCPKVFHLSCHVPALLSFPGGEWVCTLCRSL. In terms of domain architecture, Bromo spans 1176-1282; that stretch reads GLSMYDQKKC…VFFEGWLKEI (107 aa). Positions 1289–1351 are disordered; it reads AQPRQEDSDS…FRLANSISQV (63 aa).

In terms of assembly, can form homodimers and heterodimers. Interacts with CBX5, CBX1 and CBX3 via PxVxL motif.

Its subcellular location is the nucleus. Its function is as follows. May function as transcription repressor; The repressive effects are mediated, at least in part, by recruitment of deacetylase activity. May play a role as negative regulator of postmeiotic genes acting through CBX3 complex formation and centromere association. The polypeptide is Tripartite motif-containing protein 66 (TRIM66) (Homo sapiens (Human)).